We begin with the raw amino-acid sequence, 576 residues long: Potassium-transporting ATPase potassium-binding subunit (576 aa).

12 consecutive transmembrane segments (helical) span residues 4 to 24 (QAWIQLAVFLALLMLLAWPLG), 65 to 85 (AYALALLAFNALGALAVYALQ), 136 to 156 (ALGVQNFLSAATGIAVAFALI), 179 to 199 (VYVLLPLSLVFAVFLVSQGVI), 257 to 277 (LSNFAQMLAIFLIPAGLVFAF), 288 to 308 (GALLAAMTVMFVLAVVTVTSL), 341 to 361 (FGIAASALFAAITTAASCGAV), 371 to 391 (LGGAVPLLLIQLGEVVFGGVG), 393 to 413 (GLYGMLVFAILAVFIAGLMIG), 430 to 450 (MTAVVILVTPLLALLGTAVAL), 497 to 517 (LLLAVAMWFGRFGVIVPVLAI), and 540 to 560 (LFVVLLIGAVLLVGLLNYVPA).

It belongs to the KdpA family. As to quaternary structure, the system is composed of three essential subunits: KdpA, KdpB and KdpC.

It localises to the cell inner membrane. Its function is as follows. Part of the high-affinity ATP-driven potassium transport (or Kdp) system, which catalyzes the hydrolysis of ATP coupled with the electrogenic transport of potassium into the cytoplasm. This subunit binds the periplasmic potassium ions and delivers the ions to the membrane domain of KdpB through an intramembrane tunnel. This chain is Potassium-transporting ATPase potassium-binding subunit, found in Methylibium petroleiphilum (strain ATCC BAA-1232 / LMG 22953 / PM1).